Reading from the N-terminus, the 237-residue chain is RNA chaperone ProQ (237 aa).

Residues 106–188 (AKARVQAQRA…QPRPVPVTDI (83 aa)) are disordered. The span at 146-158 (PRREAGAAPENRK) shows a compositional bias: basic and acidic residues.

This sequence belongs to the ProQ family.

The protein resides in the cytoplasm. Functionally, RNA chaperone with significant RNA binding, RNA strand exchange and RNA duplexing activities. May regulate ProP activity through an RNA-based, post-transcriptional mechanism. The protein is RNA chaperone ProQ of Yersinia pseudotuberculosis serotype O:1b (strain IP 31758).